The following is a 650-amino-acid chain: Fructose-1,6-bisphosphatase class 3 (650 aa).

The protein belongs to the FBPase class 3 family. Requires Mn(2+) as cofactor.

The enzyme catalyses beta-D-fructose 1,6-bisphosphate + H2O = beta-D-fructose 6-phosphate + phosphate. The protein operates within carbohydrate biosynthesis; gluconeogenesis. In Finegoldia magna (strain ATCC 29328 / DSM 20472 / WAL 2508) (Peptostreptococcus magnus), this protein is Fructose-1,6-bisphosphatase class 3.